Consider the following 1886-residue polypeptide: MATRRLPAVTQTDGSRTATESGVPEYEDQIRSYRNDQRRRHIWAGRGRRLLSIMPGVSSSERTLEMQMNPEVQLQRSMNHRAEAVPAEVLYRTFHGSVNHRVYSHRSEERMMVVNGSQVDRSFIQESSFEVLSRTGIEFIHIGVMLVRIQILHRKFAGTMALIVFRDTRWSDDRAVLAAMEIDLSEGNQIVYVLPDIMMTIKSFYRHIQICVMTKGYDGWQGEDNLLITRGLTGRLSNTSNVGFAYDVKAMVEHLQSNGVKAIKGEKWDAKRFHNGQWNIEPSKVVVPMQPTEMKAVSNYDGTTSLRFSNYAAASTSKPPQYNEKDEEINEDEQEINHSLNLILNDEESTDEDEEYYQYQRYAWSQVGDSTFYYDTDGVWEEIDRCNDLPEYVPSETSTPTIDESEAIIDEFLEHAYEQRCDSDESLQSGDPRKYEYPTPQSSPEHLDNESRSRSSSASSTSMQDDVEEIVRLMKEMRMKKQKKKKAQQALSSQAQEEPIIEENIEENKQAQEEPTQEEIPTHKENQPEEIQNEEIHVFEEEPAFKHLAAQLSELVNMAESSGQSGVGFQPPVNAQPDVNMEGPAGYAPATSQATWSNGVNIPVKSANFRWKGPVGNFQLPSAQGKDGAMLVFGMNYSPEVFDRWASITRNYISSFNFNDGGDKIAWMEDLLGETERKIFVSWRMRFKDEYQNLAKIANQDGGTQAILSQIRRIFLGEDPVLGQNTVQNIAFRKLKQLVCPNYQSIRRYLMDYLTLAAETGLMWSETEGPAISEELFTKMPAAIGERVAQAYKIMDPTSAVNLPSRVYFTINYLTEQCKEASYMRSLKALDFCRDFPIEGYYGRSGEKKKYTARKATKYTGKAHDNHIRVTKAKYQRKCKCYICGQEGHYANQCRNKHKDQQRVAILQSLDLKENEEVVSADDKEEEDDEIFSVLGEEDYQEETIMVLEEDDIQQIIKEFSKFGDLSRRNVGPNFPGPAEVQMGVLKPKSSWRRPIQATLEEINCHHNWTAISTGQLACRSCKQFLAGVQCHHCHAVYCFMCAEAYHDVQAEKILSKDYSFSARGKKGKAVIIEEDEIEGEFLISQLQQENQRLQKQVERLQEELMKLHREKDEALKHSEKASRVFSTIQESDEAELNLIKEELRQFKEETRMAIAQLKEAIIVQEEDTIEERCAMILEEKHTENIYSATAKAEYNGLYNVKVGIKPDNMEPYYINAIVDTGATACLIQISAIPENYYEDAKVTVNFRSVLGIGTSTQMIKAGRILIGEQYFRMPVTYVMNMGLSPGIQMIIGCSFIRSLEGGLRIEKDIITFYKLVTSIETSRTTQVANSIEELELSEDEYLNIAASVETPSFLDQEFARKNKDLLKEMKEMKYIGENPMEFWKNNKIKCKLNIINPDIKIMGRPIKHVTPGDEEAMTRQINLLLQMKVIRPSESKHRSTAFIVRSGTEIDPITGKEKKGKERMVFNYKLLNENTESDQYSLPGINTIISKVGRSKIYSKFDLKSGFWQVAMEEESVPWTAFLAGNKLYEWLVMPFGLKNAPAIFQRKMDNVFKGTEKFIAVYIDDILVFSETAEQHSQHLYTMLQLCKENGLILSPTKMKIGTPEIDFLGASLGCTKIKLQPHIISKICDFSDEKLATPEGMRSWLGILSYARNYIQDIGKLVQPLRQKMAPTGDKRMNPETWKMVRQIKEKVKNLPDLQLPPKDSFIIIETDGCMTGWGAVCKWKMSKHDPRSTERICAYASGSFNPIKSTIDAEIQAAIHGLDKFKIYYLDKKELIIRSDCEAIIKFYNKTNENKPSRVRWLTFSDFLTGLGITVTFEHIDGKHNGLADALSRMINFIVEKNDESPYRFTSSVEDALKVCNDDHGRNLISAVINDIITVLRR.

3 disordered regions span residues 1–24, 420–466, and 478–529; these read MATR…SGVP, RCDS…MQDD, and RMKK…NQPE. A compositionally biased stretch (polar residues) spans 9–20; sequence VTQTDGSRTATE. The segment covering 488–498 has biased composition (low complexity); the sequence is QQALSSQAQEE. The CCHC-type zinc-finger motif lies at 879–896; it reads CKCYICGQEGHYANQCRN. In terms of domain architecture, Peptidase A2 spans 1215–1292; sequence INAIVDTGAT…GLSPGIQMII (78 aa). D1220 (for protease activity) is an active-site residue. The region spanning 1425–1615 is the Reverse transcriptase domain; sequence LLQMKVIRPS…PEIDFLGASL (191 aa). Positions 1706 to 1841 constitute an RNase H type-1 domain; it reads KDSFIIIETD…ADALSRMINF (136 aa). Residues D1715, E1758, D1784, and D1833 each contribute to the Mg(2+) site.

In terms of processing, polyprotein P3 is presumably proteolytically cleaved into several chains by viral protease.

The enzyme catalyses Endonucleolytic cleavage to 5'-phosphomonoester.. It carries out the reaction DNA(n) + a 2'-deoxyribonucleoside 5'-triphosphate = DNA(n+1) + diphosphate. In terms of biological role, capsid protein self assembles to form a bacilliform capsid about 90-900 nm in length. The capsid encapsulates the genomic dsDNA. Following virus entry into host cell, provides nuclear import of the viral genome. Virus particles do not enter the nucleus, but are targeted to the nuclear membrane through the interaction with host importins. In Commelina yellow mottle virus (CoYMV), this protein is Polyprotein P3.